A 289-amino-acid polypeptide reads, in one-letter code: Phenylalanine-4-hydroxylase (289 aa).

Positions 144, 149, and 189 each coordinate Fe cation.

It belongs to the biopterin-dependent aromatic amino acid hydroxylase family. The cofactor is Fe(2+).

The catalysed reaction is (6R)-L-erythro-5,6,7,8-tetrahydrobiopterin + L-phenylalanine + O2 = (4aS,6R)-4a-hydroxy-L-erythro-5,6,7,8-tetrahydrobiopterin + L-tyrosine. Its pathway is amino-acid degradation; L-phenylalanine degradation; acetoacetate and fumarate from L-phenylalanine: step 1/6. This chain is Phenylalanine-4-hydroxylase (phhA), found in Vibrio cholerae serotype O1 (strain ATCC 39315 / El Tor Inaba N16961).